A 176-amino-acid chain; its full sequence is Putative REP-associated tyrosine transposase (176 aa).

2 residues coordinate Mg(2+): His-59 and His-61. Tyr-148 acts as the Nucleophile in catalysis.

Belongs to the transposase 17 family. RAYT subfamily. In terms of assembly, homodimer. Mg(2+) is required as a cofactor.

Functionally, transposase responsible for transposition an insertion sequence (IS) element. Transposition occurs in 2 main steps, excision from the donor DNA 'top strand' into a single strand circle and its subsequent reinsertion into the DNA target. This increases the copy number of the IS. The polypeptide is Putative REP-associated tyrosine transposase (Haemophilus influenzae (strain ATCC 51907 / DSM 11121 / KW20 / Rd)).